Consider the following 165-residue polypeptide: Ribosome maturation factor RimM (165 aa).

In terms of domain architecture, PRC barrel spans 94-165 (EDEFYIADLT…YVILNYQREA (72 aa)).

This sequence belongs to the RimM family. Binds ribosomal protein uS19.

It is found in the cytoplasm. An accessory protein needed during the final step in the assembly of 30S ribosomal subunit, possibly for assembly of the head region. Essential for efficient processing of 16S rRNA. May be needed both before and after RbfA during the maturation of 16S rRNA. It has affinity for free ribosomal 30S subunits but not for 70S ribosomes. The protein is Ribosome maturation factor RimM of Rickettsia conorii (strain ATCC VR-613 / Malish 7).